The sequence spans 371 residues: Ligninase LG5 (371 aa).

Residues 1–21 (MAFKKLLAVLTAALSLRAAQG) form the signal peptide. Residues 22-27 (AAVEKR) constitute a propeptide that is removed on maturation. Disulfide bonds link cysteine 30–cysteine 42, cysteine 41–cysteine 311, cysteine 61–cysteine 146, and cysteine 275–cysteine 344. Catalysis depends on histidine 74, which acts as the Proton acceptor. Ca(2+) is bound by residues aspartate 75, glycine 92, aspartate 94, and serine 96. Histidine 202 provides a ligand contact to heme b. Ca(2+) is bound by residues serine 203, aspartate 220, threonine 222, isoleucine 225, and aspartate 227. Residue asparagine 283 is glycosylated (N-linked (GlcNAc...) asparagine). The segment at 349 to 371 (FPTLSTLPGPATSVARIPPPPGA) is disordered.

It belongs to the peroxidase family. Ligninase subfamily. The cofactor is Ca(2+). Requires heme b as cofactor.

It catalyses the reaction 1-(3,4-dimethoxyphenyl)-2-(2-methoxyphenoxy)propane-1,3-diol + H2O2 = 3,4-dimethoxybenzaldehyde + guaiacol + glycolaldehyde + H2O. The catalysed reaction is 2 (3,4-dimethoxyphenyl)methanol + H2O2 = 2 (3,4-dimethoxyphenyl)methanol radical + 2 H2O. The protein operates within secondary metabolite metabolism; lignin degradation. Depolymerization of lignin. Catalyzes the C(alpha)-C(beta) cleavage of the propyl side chains of lignin. The polypeptide is Ligninase LG5 (GLG5) (Phanerodontia chrysosporium (White-rot fungus)).